The sequence spans 249 residues: Ribonuclease 3 (249 aa).

One can recognise an RNase III domain in the interval 29–151 (SSDIEVIKKN…LIGALYECLR (123 aa)). Mg(2+) is bound at residue glutamate 65. Aspartate 69 is a catalytic residue. 2 residues coordinate Mg(2+): glutamate 137 and glutamate 140. Glutamate 140 is an active-site residue. A DRBM domain is found at 179–249 (NEKSALQEWS…AKEALKKLTN (71 aa)). The interval 227–249 (GWGSSRKKAQKEAAKEALKKLTN) is disordered. The span at 236-249 (QKEAAKEALKKLTN) shows a compositional bias: basic and acidic residues.

This sequence belongs to the ribonuclease III family. In terms of assembly, homodimer. The cofactor is Mg(2+).

The protein resides in the cytoplasm. The catalysed reaction is Endonucleolytic cleavage to 5'-phosphomonoester.. In terms of biological role, digests double-stranded RNA. Involved in the processing of primary rRNA transcript to yield the immediate precursors to the large and small rRNAs (23S and 16S). Processes some mRNAs, and tRNAs when they are encoded in the rRNA operon. Processes pre-crRNA and tracrRNA of type II CRISPR loci if present in the organism. The polypeptide is Ribonuclease 3 (Prochlorococcus marinus (strain SARG / CCMP1375 / SS120)).